The primary structure comprises 316 residues: Glutamyl endopeptidase (316 aa).

Positions 1-30 (MVSKKSVKRGLITGLIGISIYSLGMHPAQA) are cleaved as a signal peptide. Positions 31 to 94 (APSPHTPVSS…SPAKAPYSIK (64 aa)) are excised as a propeptide. Cys-126 and Cys-142 are oxidised to a cystine. Active-site charge relay system residues include His-141 and Ser-261. A disulfide bond links Cys-275 and Cys-279.

The protein belongs to the peptidase S1B family.

The protein localises to the secreted. It carries out the reaction Preferential cleavage: Glu-|-Xaa, Asp-|-Xaa.. Functionally, specific for hydrolysis of peptide bonds on the carboxyl side of acidic amino acid residues, with a strong preference for Glu. The sequence is that of Glutamyl endopeptidase (blaSE) from Bacillus licheniformis (strain ATCC 14580 / DSM 13 / JCM 2505 / CCUG 7422 / NBRC 12200 / NCIMB 9375 / NCTC 10341 / NRRL NRS-1264 / Gibson 46).